A 264-amino-acid polypeptide reads, in one-letter code: uncharacterized protein (264 aa).

Helical transmembrane passes span 19–39 (LFPAVIFASLAITQIIPLPFL), 42–62 (YDWLLIICVLMQLWMVRSGLE), 69–89 (VITLFHLIGLALELFKVHMGS), 100–120 (IFGVPLYSGFMYASVASYLCQ), 136–156 (FAVVPLAAAIYLNFFTHHFSI), 160–180 (WWLSGLVIIVFWQTWVTYEVN), 192–212 (FILIGFFIWIAENIATFFGAW), and 223–243 (LVHLGKVSSWLLLVIVSFLIV).

It is found in the cell membrane. This is an uncharacterized protein from Bacillus subtilis (strain 168).